The following is a 73-amino-acid chain: Large ribosomal subunit protein bL31 (73 aa).

Belongs to the bacterial ribosomal protein bL31 family. Type A subfamily. As to quaternary structure, part of the 50S ribosomal subunit.

Its function is as follows. Binds the 23S rRNA. This Synechococcus sp. (strain JA-3-3Ab) (Cyanobacteria bacterium Yellowstone A-Prime) protein is Large ribosomal subunit protein bL31.